The following is a 358-amino-acid chain: U5 small nuclear ribonucleoprotein 40 kDa protein (358 aa).

Residue Lys-18 forms a Glycyl lysine isopeptide (Lys-Gly) (interchain with G-Cter in SUMO2) linkage. Arg-21 bears the Asymmetric dimethylarginine mark. WD repeat units lie at residues 65–104 (GHEGEVYCCKFHPNGSTLASAGFDRLILLWNVYGDCDNYA), 108–147 (GHSGAVMELHYNTDGSMLFSASTDKTVAVWDSETGERVKR), 150–190 (GHTS…AVQT), 192–231 (QNTYQVLAVTFNDTSDQIISGGIDNDIKVWDLRQNKLTYT), 234–273 (GHADSVTGLSLSSEGSYLLSNAMDNTVRVWDVRPFAPKER), 284–323 (NFEKNLLRCSWSPDGSKIAAGSADRFVYVWDTTSRRVLYK), and 326–358 (GHAGSINEVAFHPDEPIILSASSDKRLYMGEIQ). A Glycyl lysine isopeptide (Lys-Gly) (interchain with G-Cter in SUMO2) cross-link involves residue Lys-271.

As to quaternary structure, component of the pre-catalytic and catalytic spliceosome complexes. Component of the postcatalytic spliceosome P complex. Part of the U5 snRNP complex. Interacts with PRPF8. Component of the U4/U6-U5 tri-snRNP complex composed of the U4, U6 and U5 snRNAs and at least PRPF3, PRPF4, PRPF6, PRPF8, PRPF31, SNRNP200, TXNL4A, WDR57, SNRNP40, DDX23, CD2BP2, PPIH, SNU13, EFTUD2, SART1 and USP39. Component of the minor spliceosome, which splices U12-type introns.

It localises to the nucleus. Required for pre-mRNA splicing as component of the activated spliceosome. Component of the U5 small nuclear ribonucleoprotein (snRNP) complex and the U4/U6-U5 tri-snRNP complex, building blocks of the spliceosome. As a component of the minor spliceosome, involved in the splicing of U12-type introns in pre-mRNAs. In Mus musculus (Mouse), this protein is U5 small nuclear ribonucleoprotein 40 kDa protein (Snrnp40).